Here is a 267-residue protein sequence, read N- to C-terminus: Diphthine--ammonia ligase (267 aa).

Tyr-97 carries the phosphotyrosine modification.

Belongs to the Diphthine--ammonia ligase family.

It carries out the reaction diphthine-[translation elongation factor 2] + NH4(+) + ATP = diphthamide-[translation elongation factor 2] + AMP + diphosphate + H(+). It functions in the pathway protein modification; peptidyl-diphthamide biosynthesis. Functionally, amidase that catalyzes the last step of diphthamide biosynthesis using ammonium and ATP. Diphthamide biosynthesis consists in the conversion of an L-histidine residue in the translation elongation factor eEF-2 (EEF2) to diphthamide. This Bos taurus (Bovine) protein is Diphthine--ammonia ligase (DPH6).